Here is a 289-residue protein sequence, read N- to C-terminus: Shikimate dehydrogenase (NADP(+)) (289 aa).

Shikimate contacts are provided by residues 20–22 and Ser67; that span reads SIS. Lys71 (proton acceptor) is an active-site residue. Shikimate-binding residues include Asn92 and Asp107. Residues 132 to 136 and Val230 each bind NADP(+); that span reads GGGGA. Residue Tyr232 participates in shikimate binding. Gly253 is an NADP(+) binding site.

The protein belongs to the shikimate dehydrogenase family. In terms of assembly, homodimer.

It carries out the reaction shikimate + NADP(+) = 3-dehydroshikimate + NADPH + H(+). It functions in the pathway metabolic intermediate biosynthesis; chorismate biosynthesis; chorismate from D-erythrose 4-phosphate and phosphoenolpyruvate: step 4/7. Involved in the biosynthesis of the chorismate, which leads to the biosynthesis of aromatic amino acids. Catalyzes the reversible NADPH linked reduction of 3-dehydroshikimate (DHSA) to yield shikimate (SA). The sequence is that of Shikimate dehydrogenase (NADP(+)) from Streptococcus mutans serotype c (strain ATCC 700610 / UA159).